Consider the following 240-residue polypeptide: Mediator of RNA polymerase II transcription subunit 19-B (240 aa).

Positions M1 to S14 are enriched in polar residues. 2 disordered regions span residues M1–K29 and P168–R240. Basic residues-rich tracts occupy residues P168–R180 and K209–R221.

This sequence belongs to the Mediator complex subunit 19 family. In terms of assembly, component of the Mediator complex.

It localises to the nucleus. Component of the Mediator complex, a coactivator involved in the regulated transcription of nearly all RNA polymerase II-dependent genes. Mediator functions as a bridge to convey information from gene-specific regulatory proteins to the basal RNA polymerase II transcription machinery. Mediator is recruited to promoters by direct interactions with regulatory proteins and serves as a scaffold for the assembly of a functional preinitiation complex with RNA polymerase II and the general transcription factors. This is Mediator of RNA polymerase II transcription subunit 19-B (med19b) from Danio rerio (Zebrafish).